Reading from the N-terminus, the 128-residue chain is C-C motif chemokine 28 (128 aa).

An N-terminal signal peptide occupies residues Met1–Ala24. 2 cysteine pairs are disulfide-bonded: Cys32–Cys60 and Cys33–Cys75. Positions Glu89–Tyr128 are disordered. A compositionally biased stretch (basic residues) spans Lys94–Gly113. Basic and acidic residues predominate over residues Ala114–Tyr128.

The protein belongs to the intercrine beta (chemokine CC) family.

It localises to the secreted. Chemotactic activity for resting CD4, CD8 T-cells and eosinophils. Binds to CCR3 and CCR10 and induces calcium mobilization in a dose-dependent manner. In Canis lupus familiaris (Dog), this protein is C-C motif chemokine 28 (CCL28).